We begin with the raw amino-acid sequence, 1160 residues long: DNA polymerase III subunit alpha (1160 aa).

It belongs to the DNA polymerase type-C family. DnaE subfamily. As to quaternary structure, the DNA polymerase III holoenzyme complex contains at least 10 different subunits organized into 3 functionally essential subassemblies: the Pol III core, the beta sliding clamp processivity factor and the clamp-loading complex. The Pol III core (subunits alpha, epsilon and theta) contains the polymerase and the 3'-5' exonuclease proofreading activities. The polymerase is tethered to the template via the dimeric beta sliding clamp processivity factor. The clamp loader (also called gamma complex) assembles the beta sliding clamp onto the primed template and plays a central role in the organization and communication at the replication fork. The clamp-loading complex contains delta, delta', psi and chi, and 3 copies of either or both of two different DnaX proteins, gamma and tau. The DNA replisome complex has a single clamp loader (3 tau and 1 each of delta, delta', psi and chi subunits) which binds 3 Pol III cores (1 core on the leading strand and 2 on the lagging strand) each with a beta sliding clamp dimer. Additional proteins in the replisome are other copies of gamma, psi and chi, Ssb, DNA helicase and RNA primase. Interacts with the beta sliding-clamp subunit via the peptide Gln-Ala-Asp-Met-Phe (residues 920-924).

Its subcellular location is the cytoplasm. It carries out the reaction DNA(n) + a 2'-deoxyribonucleoside 5'-triphosphate = DNA(n+1) + diphosphate. Functionally, DNA polymerase III is a complex, multichain enzyme responsible for most of the replicative synthesis in bacteria. This DNA polymerase also exhibits 3' to 5' exonuclease activity. The alpha chain is the DNA polymerase catalytic subunit. It is tethered to replicating DNA by the beta sliding clamp (dnaN), which confers extremely high processivity to the catalytic subunit, copying a 5.4 kb genome in 11 seconds, a speed of at least 500 nucleotides/second at 30 degrees Celsius. The chain is DNA polymerase III subunit alpha (dnaE) from Escherichia coli (strain K12).